Reading from the N-terminus, the 116-residue chain is Somatostatin (116 aa).

The first 24 residues, Met1–Cys24, serve as a signal peptide directing secretion. Positions Ala25–Arg88 are excised as a propeptide. Ala43 carries the alanine amide modification. Positions Gln62 to Arg99 are disordered. An intrachain disulfide couples Cys105 to Cys116.

This sequence belongs to the somatostatin family. In terms of processing, C-terminal amidation of the neuronostatin peptide is required for its biological activity, including for the regulation of mean arterial pressure.

The protein localises to the secreted. Its function is as follows. Inhibits the secretion of pituitary hormones, including that of growth hormone/somatotropin (GH1), PRL, ACTH, luteinizing hormone (LH) and TSH. Also impairs ghrelin- and GnRH-stimulated secretion of GH1 and LH; the inhibition of ghrelin-stimulated secretion of GH1 can be further increased by neuronostatin. In terms of biological role, may enhance low-glucose-induced glucagon release by pancreatic alpha cells. This effect may be mediated by binding to GPR107 and PKA activation. May regulate cardiac contractile function. May compromise cardiomyocyte viability. In the central nervous system, may impair memory retention and may affect hippocampal excitability. May also have anxiolytic and anorexigenic effects. May play a role in arterial pressure regulation. May inhibit basal, but not ghrelin- or GnRH-stimulated secretion of GH1 or LH, but does not affect the release of other pituitary hormones, including PRL, ACTH, FSH or TSH. Potentiates inhibitory action of somatostatin on ghrelin-stimulated secretion of GH1, but not that on GnRH-stimulated secretion of LH. This chain is Somatostatin (SST), found in Canis lupus familiaris (Dog).